Reading from the N-terminus, the 799-residue chain is Integrin beta-1 (799 aa).

An N-terminal signal peptide occupies residues methionine 1–glycine 20. Residues glutamine 21–aspartate 729 are Extracellular-facing. The PSI domain maps to arginine 26–histidine 76. 28 disulfides stabilise this stretch: cysteine 27–cysteine 45, cysteine 35–cysteine 465, cysteine 38–cysteine 64, cysteine 48–cysteine 75, cysteine 207–cysteine 213, cysteine 261–cysteine 301, cysteine 401–cysteine 415, cysteine 435–cysteine 463, cysteine 467–cysteine 487, cysteine 478–cysteine 490, cysteine 492–cysteine 501, cysteine 503–cysteine 534, cysteine 517–cysteine 532, cysteine 526–cysteine 537, cysteine 539–cysteine 554, cysteine 556–cysteine 577, cysteine 561–cysteine 575, cysteine 569–cysteine 580, cysteine 582–cysteine 591, cysteine 593–cysteine 616, cysteine 600–cysteine 614, cysteine 608–cysteine 619, cysteine 621–cysteine 631, cysteine 634–cysteine 637, cysteine 641–cysteine 692, cysteine 647–cysteine 666, cysteine 650–cysteine 662, and cysteine 700–cysteine 724. N-linked (GlcNAc...) asparagine glycosylation is found at asparagine 50, asparagine 94, and asparagine 97. The 239-residue stretch at aspartate 140–leucine 378 folds into the VWFA domain. Residues serine 152 and serine 154 each contribute to the Mg(2+) site. Ca(2+)-binding residues include serine 154, aspartate 157, aspartate 158, and glutamate 189. Residues cysteine 207–cysteine 213 form a CX3CL1-binding region. Asparagine 212 is a glycosylation site (N-linked (GlcNAc...) asparagine). Residues asparagine 244, aspartate 246, proline 248, and glutamate 249 each contribute to the Ca(2+) site. Glutamate 249 contributes to the Mg(2+) binding site. An N-linked (GlcNAc...) asparagine glycan is attached at asparagine 269. A CX3CL1-binding region spans residues leucine 295–tyrosine 314. Residue glycine 362 coordinates Ca(2+). Asparagine 363, asparagine 406, and asparagine 417 each carry an N-linked (GlcNAc...) asparagine glycan. The segment at isoleucine 383–asparagine 466 is interaction with TMEM182. I-EGF domains follow at residues cysteine 467–glutamate 502, cysteine 503–glutamate 555, cysteine 556–aspartate 592, and cysteine 593–glutamate 632. Residue asparagine 482 is glycosylated (N-linked (GlcNAc...) asparagine). Residue asparagine 521 is glycosylated (N-linked (GlcNAc...) asparagine). Asparagine 585 carries N-linked (GlcNAc...) asparagine glycosylation. Asparagine 670 carries N-linked (GlcNAc...) asparagine glycosylation. The helical transmembrane segment at isoleucine 730 to tryptophan 752 threads the bilayer. The Cytoplasmic portion of the chain corresponds to lysine 753–lysine 799. The tract at residues glutamate 763–glutamate 768 is signal for sorting from recycling endosomes; interaction with ACAP1. The residue at position 778 (threonine 778) is a Phosphothreonine. Tyrosine 784 carries the phosphotyrosine modification. Serine 786 carries the phosphoserine modification. Residues serine 786–asparagine 793 form an interaction with ITGB1BP1 region. Threonine 790 carries the post-translational modification Phosphothreonine. Residue lysine 795 is modified to N6-acetyllysine; alternate. Lysine 795 is covalently cross-linked (Glycyl lysine isopeptide (Lys-Gly) (interchain with G-Cter in SUMO1); alternate).

The protein belongs to the integrin beta chain family. As to quaternary structure, interacts with seprase FAP (seprase); the interaction occurs at the cell surface of invadopodia membrane in a collagen-dependent manner. Heterodimer of an alpha and a beta subunit. Beta-1 associates with either alpha-1, alpha-2, alpha-3, alpha-4, alpha-5, alpha-6, alpha-7, alpha-8, alpha-9, alpha-10, alpha-11 or alpha-V. ITGA6:ITGB1 is found in a complex with CD9; interaction takes place in oocytes and is involved in sperm-egg fusion. Binds LGALS3BP and NMRK2, when associated with alpha-7, but not with alpha-5. Interacts with FLNA, FLNB, FLNC and RANBP9. Interacts with KRT1 in the presence of RACK1 and SRC. Interacts with JAML; integrin alpha-4/beta-1 may regulate leukocyte to endothelial cells adhesion by controlling JAML homodimerization. Interacts with RAB21. Interacts (via the cytoplasmic region) with RAB25 (via the hypervariable C-terminal region). Interacts with MYO10. Interacts with ITGB1BP1 (via C-terminal region); the interaction is a prerequisite for focal adhesion disassembly. Interacts with TLN1; the interaction is prevented by competitive binding of ITGB1BP1. Interacts with ACAP1; required for ITGB1 recycling. Interacts with ASAP3. Interacts with FERMT2; the interaction is inhibited in presence of ITGB1BP1. Interacts with DAB2. Interacts with FGR and HCK. Interacts with alpha-7A and alpha-7B in adult skeletal muscle. Interacts with alpha-7B in cardiomyocytes of adult heart. Interacts with EMP2; the interaction may be direct or indirect and ITGB1 has a heterodimer form. ITGA5:ITGB1 interacts with CCN3. ITGA4:ITGB1 is found in a ternary complex with CX3CR1 and CX3CL1. ITGA5:ITGB1 interacts with FBN1. ITGA5:ITGB1 acts as a receptor for fibronectin FN1 and mediates R-G-D-dependent cell adhesion to FN1. ITGA5:ITGB1 interacts with IL1B. Interacts with MDK. ITGA4:ITGB1 interacts with MDK; this interaction mediates MDK-induced osteoblast cells migration through PXN phosphorylation. ITGA6:ITGB1 interacts with MDK; this interaction mediates MDK-induced neurite-outgrowth. ITGA5:ITGB1 interacts with ACE2. Interacts with TMEM182 and LAMB1. Interacts with tensin TNS3; TNS3 also interacts with PEAK1, thus acting as an adapter molecule to bridge the association of PEAK1 with ITGB1. Interacts with tensin TNS4; the interaction displaces tensin TNS3 from the ITGB1 cytoplasmic tail and promotes ITGB1 stability. Integrin ITGA9:ITGB1 interacts with SPP1/OPN (via N-terminus). Integrin ITGA9:ITGB1 interacts with TNC/TNFN3 (via the 3rd Fibronectin type-III domain). Integrins ITGA4:ITGB1 and ITGA9:ITGB1 interact with SVEP1 (via Sushi domain 21); thereby inhibit Ca(2+) intracellular signaling and as a result repress vasocontraction. ITGA4:ITGB1 and ITGA5:ITGB1 interacts with SELP. ITGA5:ITGB1 interacts with IGFBP1. ITGA4:ITGB1 interacts with BCAM. Interacts with ADGRG6.

It localises to the cell membrane. The protein resides in the cell projection. The protein localises to the invadopodium membrane. Its subcellular location is the ruffle membrane. It is found in the recycling endosome. It localises to the melanosome. The protein resides in the lamellipodium. The protein localises to the ruffle. Its subcellular location is the cell junction. It is found in the focal adhesion. Integrins alpha-1/beta-1, alpha-2/beta-1, alpha-10/beta-1 and alpha-11/beta-1 are receptors for collagen. Integrins alpha-1/beta-1 and alpha-2/beta-2 recognize the proline-hydroxylated sequence G-F-P-G-E-R in collagen. Integrins alpha-2/beta-1, alpha-3/beta-1, alpha-4/beta-1, alpha-5/beta-1, alpha-8/beta-1, alpha-10/beta-1, alpha-11/beta-1 and alpha-V/beta-1 are receptors for fibronectin. Alpha-4/beta-1 recognizes one or more domains within the alternatively spliced CS-1 and CS-5 regions of fibronectin. Integrin alpha-5/beta-1 is a receptor for fibrinogen. Integrin alpha-1/beta-1, alpha-2/beta-1, alpha-6/beta-1 and alpha-7/beta-1 are receptors for lamimin. Integrin alpha-6/beta-1 (ITGA6:ITGB1) is present in oocytes and is involved in sperm-egg fusion. Integrin alpha-4/beta-1 is a receptor for VCAM1 and recognizes the sequence Q-I-D-S in VCAM1. Integrin alpha-9/beta-1 is a receptor for VCAM1, cytotactin and osteopontin. It recognizes the sequence A-E-I-D-G-I-E-L in cytotactin. Integrin alpha-3/beta-1 is a receptor for epiligrin, thrombospondin and CSPG4. Integrin alpha-3/beta-1 provides a docking site for FAP (seprase) at invadopodia plasma membranes in a collagen-dependent manner and hence may participate in the adhesion, formation of invadopodia and matrix degradation processes, promoting cell invasion. Alpha-3/beta-1 may mediate with LGALS3 the stimulation by CSPG4 of endothelial cells migration. Integrin alpha-V/beta-1 is a receptor for vitronectin. Beta-1 integrins recognize the sequence R-G-D in a wide array of ligands. When associated with alpha-7/beta-1 integrin, regulates cell adhesion and laminin matrix deposition. Involved in promoting endothelial cell motility and angiogenesis. Involved in osteoblast compaction through the fibronectin fibrillogenesis cell-mediated matrix assembly process and the formation of mineralized bone nodules. May be involved in up-regulation of the activity of kinases such as PKC via binding to KRT1. Together with KRT1 and RACK1, serves as a platform for SRC activation or inactivation. Plays a mechanistic adhesive role during telophase, required for the successful completion of cytokinesis. ITGA4:ITGB1 binds to fractalkine (CX3CL1) and may act as its coreceptor in CX3CR1-dependent fractalkine signaling. ITGA4:ITGB1 and ITGA5:ITGB1 bind to PLA2G2A via a site (site 2) which is distinct from the classical ligand-binding site (site 1) and this induces integrin conformational changes and enhanced ligand binding to site 1. ITGA5:ITGB1 acts as a receptor for fibrillin-1 (FBN1) and mediates R-G-D-dependent cell adhesion to FBN1. ITGA5:ITGB1 is a receptor for IL1B and binding is essential for IL1B signaling. ITGA5:ITGB3 is a receptor for soluble CD40LG and is required for CD40/CD40LG signaling. Plays an important role in myoblast differentiation and fusion during skeletal myogenesis. ITGA9:ITGB1 may play a crucial role in SVEP1/polydom-mediated myoblast cell adhesion. Integrins ITGA9:ITGB1 and ITGA4:ITGB1 repress PRKCA-mediated L-type voltage-gated channel Ca(2+) influx and ROCK-mediated calcium sensitivity in vascular smooth muscle cells via their interaction with SVEP1, thereby inhibit vasocontraction. The sequence is that of Integrin beta-1 (Itgb1) from Rattus norvegicus (Rat).